The following is a 111-amino-acid chain: Denmotoxin (111 aa).

An N-terminal signal peptide occupies residues 1-19; the sequence is MKTLLLAVAVVAFVCLGSA. Residues 20 to 34 constitute a propeptide that is removed on maturation; the sequence is DQLGLGRQQIDWGQG. Glutamine 35 is subject to Pyrrolidone carboxylic acid. 5 cysteine pairs are disulfide-bonded: cysteine 44-cysteine 68, cysteine 47-cysteine 55, cysteine 61-cysteine 87, cysteine 91-cysteine 102, and cysteine 103-cysteine 108.

In terms of assembly, monomer. As to expression, expressed by the venom gland.

The protein localises to the secreted. Functionally, this bird-specific postsynaptic neurotoxin irreversibly binds and inhibits the chick muscle alpha-1-beta-1-gamma-delta (CHRNA1-CHRNB1-CHRNG-CHNRD) nicotinic acetylcholine receptor (nAChR) 100-fold more compared with the mouse receptor. The weak binding to mouse receptor is reversible. The polypeptide is Denmotoxin (Boiga dendrophila (Mangrove snake)).